The sequence spans 734 residues: MATKFPKFSQALSQDPTTRRIWYGIATAHDFESHDGMTEENLYQKIFASHFGHLAIIFLWTSGNLFHVAWQGNFEQWVLNPLKVKPIAHAIWDPHFGQPALKAFSKGGSAYPVNIAYSGVYHWWYTIGMRSNQDLYSGALFLLVLSALLLFGGWLHLQPKFKPGLSWFKNNEPRLNHHLSGLFGVSSLARTGHLVHVAIPEARGQHVGWDNFTTVLPHPAGLQPFFSGNWSVYAQNPDTAQHLFGTNEGAGTAILTFLGGFHPQSQSLWLTDMAHHHLAIAVVFIVAGHMYRTNWGIGHNLKDILDAHRPPSGRLGAGHKGLFDTITNSLHIQLGLALASLGVITSLVAQHMYAMPPYAFMAKDFTTQASLYTHHQYIAGFLMVGAFAHGAIFFVRDYDPEQNKDNVLARMLEHKEAIISHLSWVTLFLGFHTLGLYVHNDTMIAFGTPEKQILIEPVFAQWIQASSGKALYGFDVLLSSSTNIATQAGSNIWLPGWLEAINSGKNSLFLTIGPGDFLVHHAIALGLHTTTLILVKGALDARGSKLMPDKKDFGYSFPCDGPGRGGTCDISAWDAFYLAVFWMLNTIGWVTFYWHWKHITIWQGNATQFNESSTYLMGWFRDYLWLNSSPLINGYNPYGMNNLSVWSWMFLFGHLVWATGFMFLISWRGYWQELIETLAWAHERTPLANLIRWKDKPVALSIVQARLVGLAHFSVGYVLTYAAFVLASTAGKFG.

The next 8 helical transmembrane spans lie at I46–A69, L135–Q158, L175–I199, M273–Y291, L330–Y353, A369–V395, A417–H439, and F517–V535. 2 residues coordinate [4Fe-4S] cluster: C559 and C568. The next 2 membrane-spanning stretches (helical) occupy residues A575–W596 and L643–I665. The chlorophyll a site is built by H654, M662, and Y670. W671 lines the phylloquinone pocket. A helical membrane pass occupies residues L707–A727.

It belongs to the PsaA/PsaB family. As to quaternary structure, the PsaA/B heterodimer binds the P700 chlorophyll special pair and subsequent electron acceptors. PSI consists of a core antenna complex that captures photons, and an electron transfer chain that converts photonic excitation into a charge separation. The eukaryotic PSI reaction center is composed of at least 11 subunits. It depends on P700 is a chlorophyll a/chlorophyll a' dimer, A0 is one or more chlorophyll a, A1 is one or both phylloquinones and FX is a shared 4Fe-4S iron-sulfur center. as a cofactor.

The protein localises to the plastid. It is found in the chloroplast thylakoid membrane. It carries out the reaction reduced [plastocyanin] + hnu + oxidized [2Fe-2S]-[ferredoxin] = oxidized [plastocyanin] + reduced [2Fe-2S]-[ferredoxin]. Its function is as follows. PsaA and PsaB bind P700, the primary electron donor of photosystem I (PSI), as well as the electron acceptors A0, A1 and FX. PSI is a plastocyanin/cytochrome c6-ferredoxin oxidoreductase, converting photonic excitation into a charge separation, which transfers an electron from the donor P700 chlorophyll pair to the spectroscopically characterized acceptors A0, A1, FX, FA and FB in turn. Oxidized P700 is reduced on the lumenal side of the thylakoid membrane by plastocyanin or cytochrome c6. This chain is Photosystem I P700 chlorophyll a apoprotein A2, found in Pyropia yezoensis (Susabi-nori).